A 226-amino-acid chain; its full sequence is 7-carboxy-7-deazaguanine synthase (226 aa).

Substrate-binding positions include 10-12 (LQG) and Arg25. The Radical SAM core domain occupies 16 to 221 (YTGIPCIFVR…LQTHKFIWTP (206 aa)). 3 residues coordinate [4Fe-4S] cluster: Cys29, Cys33, and Cys36. Mg(2+) is bound at residue Ser38. Thr69 is a substrate binding site. Gly71 serves as a coordination point for S-adenosyl-L-methionine.

The protein belongs to the radical SAM superfamily. 7-carboxy-7-deazaguanine synthase family. Homodimer. Requires [4Fe-4S] cluster as cofactor. S-adenosyl-L-methionine serves as cofactor. The cofactor is Mg(2+).

It catalyses the reaction 6-carboxy-5,6,7,8-tetrahydropterin + H(+) = 7-carboxy-7-deazaguanine + NH4(+). The protein operates within purine metabolism; 7-cyano-7-deazaguanine biosynthesis. In terms of biological role, catalyzes the complex heterocyclic radical-mediated conversion of 6-carboxy-5,6,7,8-tetrahydropterin (CPH4) to 7-carboxy-7-deazaguanine (CDG), a step common to the biosynthetic pathways of all 7-deazapurine-containing compounds. The sequence is that of 7-carboxy-7-deazaguanine synthase from Koribacter versatilis (strain Ellin345).